The primary structure comprises 283 residues: Diaminopimelate epimerase (283 aa).

Substrate contacts are provided by Asn13, Gln45, and Asn65. Residue Cys74 is the Proton donor of the active site. Residues Gly75–Asn76, Asn156, Asn190, and Glu208–Arg209 contribute to the substrate site. Cys217 acts as the Proton acceptor in catalysis. A substrate-binding site is contributed by Gly218–Ser219.

It belongs to the diaminopimelate epimerase family. Homodimer.

The protein resides in the cytoplasm. The catalysed reaction is (2S,6S)-2,6-diaminopimelate = meso-2,6-diaminopimelate. It participates in amino-acid biosynthesis; L-lysine biosynthesis via DAP pathway; DL-2,6-diaminopimelate from LL-2,6-diaminopimelate: step 1/1. In terms of biological role, catalyzes the stereoinversion of LL-2,6-diaminopimelate (L,L-DAP) to meso-diaminopimelate (meso-DAP), a precursor of L-lysine and an essential component of the bacterial peptidoglycan. This Bartonella quintana (strain Toulouse) (Rochalimaea quintana) protein is Diaminopimelate epimerase.